Reading from the N-terminus, the 221-residue chain is MTIRDNHGVKVSGLAIMGGTFDPIHNGHLRTAVEILDRFHYSALKLIPCFQPVHKGRPSVLPQQRFEMAELAISSDDRLCVDSREMDREGPSYSIDTLRDLRSEVGPDESLIMVLGMDSFLSLPTWYKWQEIMDYAHLLVVSRPGWEPDLISELSGFCENYRAASPHELQCAPSGRVWFETLTPLGISSSMIRELARKKESIAYLLPEPVQKYIEQHQLYR.

The protein belongs to the NadD family.

The catalysed reaction is nicotinate beta-D-ribonucleotide + ATP + H(+) = deamido-NAD(+) + diphosphate. Its pathway is cofactor biosynthesis; NAD(+) biosynthesis; deamido-NAD(+) from nicotinate D-ribonucleotide: step 1/1. In terms of biological role, catalyzes the reversible adenylation of nicotinate mononucleotide (NaMN) to nicotinic acid adenine dinucleotide (NaAD). The sequence is that of Probable nicotinate-nucleotide adenylyltransferase from Marinomonas sp. (strain MWYL1).